The sequence spans 949 residues: ATPase 5, plasma membrane-type (949 aa).

Position 2 is an N-acetylserine (S2). Residues 2–61 (SELDHIKNESVDLVRIPMEEVFEELKCTKQGLTANEASHRLDVFGPNKLEEKKESKLLKF) lie on the Cytoplasmic side of the membrane. A helical transmembrane segment spans residues 62 to 81 (LGFMWNPLSWVMEVAALMAI). The Extracellular segment spans residues 82–93 (ALANGGGRPPDW). A helical transmembrane segment spans residues 94-114 (QDFVGIVCLLLINSTISFIEE). The Cytoplasmic portion of the chain corresponds to 115 to 243 (NNAGNAAAAL…GHFQKVLTSI (129 aa)). The helical transmembrane segment at 244-264 (GNFCICSIALGIIVELLVMYP) threads the bilayer. Over 265–273 (IQRRRYRDG) the chain is Extracellular. The helical transmembrane segment at 274–291 (IDNLLVLLIGGIPIAMPS) threads the bilayer. The Cytoplasmic portion of the chain corresponds to 292–643 (VLSVTMATGS…TSRAIFQRMK (352 aa)). Catalysis depends on D329, which acts as the 4-aspartylphosphate intermediate. Positions 588 and 592 each coordinate Mg(2+). A helical membrane pass occupies residues 644–665 (NYTIYAVSITIRIVFGFMFIAL). The Extracellular portion of the chain corresponds to 666-670 (IWQFD). Residues 671-693 (FSPFMVLIIAILNDGTIMTISKD) form a helical membrane-spanning segment. At 694 to 709 (RMKPSPQPDSWKLRDI) the chain is on the cytoplasmic side. Residues 710–730 (FSTGVVLGGYQALMTVVFFWV) traverse the membrane as a helical segment. The Extracellular segment spans residues 731–751 (MKDSDFFSNYFGVRPLSQRPE). Residues 752–772 (QMMAALYLQVSIISQALIFVT) form a helical membrane-spanning segment. Residues 773 to 784 (RSRSWSYAECPG) lie on the Cytoplasmic side of the membrane. Residues 785–805 (LLLLGAFVIAQLVATFIAVYA) traverse the membrane as a helical segment. Residues 806–813 (NWSFARIE) are Extracellular-facing. Residues 814-834 (GAGWGWAGVIWLYSFLTYIPL) form a helical membrane-spanning segment. Topologically, residues 835-949 (DLLKFGIRYV…IDTIQQHYTV (115 aa)) are cytoplasmic. T881 is modified (phosphothreonine). Residues S899 and S931 each carry the phosphoserine modification. The tract at residues 947–949 (YTV) is interaction with 14-3-3 proteins. T948 carries the phosphothreonine modification.

Belongs to the cation transport ATPase (P-type) (TC 3.A.3) family. Type IIIA subfamily. As to quaternary structure, binds to 14-3-3 proteins. The binding is induced by phosphorylation of Thr-948. Binding to 14-3-3 proteins activates the H(+)-ATPase. Expressed in guard cells and leaves.

The protein resides in the membrane. It carries out the reaction ATP + H2O + H(+)(in) = ADP + phosphate + 2 H(+)(out). Functionally, the plasma membrane H(+) ATPase of plants and fungi generates a proton gradient that drives the active transport of nutrients by H(+)-symport. The resulting external acidification and/or internal alkinization may mediate growth responses. This Arabidopsis thaliana (Mouse-ear cress) protein is ATPase 5, plasma membrane-type (AHA5).